Here is a 113-residue protein sequence, read N- to C-terminus: ATP-dependent Clp protease adapter protein ClpS (113 aa).

The disordered stretch occupies residues 1 to 26; that stretch reads MLMQPLMMSDNPDDESDLGLLTKTRP.

This sequence belongs to the ClpS family. As to quaternary structure, binds to the N-terminal domain of the chaperone ClpA.

Functionally, involved in the modulation of the specificity of the ClpAP-mediated ATP-dependent protein degradation. The protein is ATP-dependent Clp protease adapter protein ClpS of Ruegeria sp. (strain TM1040) (Silicibacter sp.).